A 671-amino-acid chain; its full sequence is Zinc finger and BTB domain-containing protein 16-A (671 aa).

The BTB domain maps to 34-96; the sequence is CDVVIMVDSQ…AYTATLQAKV (63 aa). 2 disordered regions span residues 130–167 and 248–289; these read ENDT…TEES and VDES…RSSV. The span at 270-279 shows a compositional bias: basic and acidic residues; it reads RSGEPDKNRD. Thr283 is subject to Phosphothreonine. 9 C2H2-type zinc fingers span residues 401–423, 429–451, 458–480, 487–509, 515–537, 544–566, 572–594, 600–622, and 628–650; these read ERCN…RKLH, YGCE…LLSH, IVCD…RQIH, IFCL…MEVH, YICS…LRSH, FECE…KRIH, YECN…YRVH, FECK…LRTH, and YQCT…MKGH.

Belongs to the krueppel C2H2-type zinc-finger protein family. As to quaternary structure, interacts with btbd6a (via BTB domain). In terms of processing, polyubiquitinated, leading to its proteasomal degradation. During early stages of primary neurogenesis, expressed in the neural epithelium, with highest levels in the forebrain and midbrain. Also expressed in a posterior-to-anterior gradient in the caudal neural plate at the 3-6 somite stage.

Its subcellular location is the nucleus. The protein localises to the cytoplasm. It functions in the pathway protein modification; protein ubiquitination. In terms of biological role, probable transcription factor. Probable substrate-recognition component of an E3 ubiquitin-protein ligase complex which mediates the ubiquitination and subsequent proteasomal degradation of target proteins. Inhibits neurogenesis. This is Zinc finger and BTB domain-containing protein 16-A from Danio rerio (Zebrafish).